The chain runs to 916 residues: MGPDRRIVAAKPRVHEVASELGVDSKIALAKLKEMGEFVKGPSSSIEPPVARKLRAALEAEGHLPGAGGDKTAAQASPAPRPPRPATADGSGAPKPQAPMSVAERQAAAEKAASEKAAAEKVAASEAADAKPAAGAPADTAKPSSPPRPSGVSAPRPGNNPFASNQGMGQRPSAPRPGNNPFSSSQGMGQRPSPSNIPRPAPPRPGSPRIGAPRPGGGQRQGGGGRPGFQQRPGSAGGGAGGGLQRPGGAGAGGFSGPRTGGGGGRGRGPGGGTAGAFGRGGGKSKARKSKRAKRQEFEMREAPSLGGVTVPRGDGGTAIRLRRGASISDFADKIDANPASLVTVLFHLGEMATATESLDEATFQILGEELGYKVQVVSPEDEDKELLEGFDIDLDAELEGESDEDLEIRPPVVTVMGHVDHGKTRLLDAIRSANVVEGEAGGITQHIGAYQVWTEHEGIERAITFIDTPGHEAFTAMRARGAQVTDIAILVVAADDGIMPQTIEALNHAQAANVPIVVAVNKVDKPEANPAKVRQQLTEFSLVAEEYGGDVMFVDVSARNNIGIQELLDAVLLTADAGLDLRANPNKDARGVAIEAKLDKGRGAVATVLIQSGTLRVGDAIVAGTAYGRVRAMADENGDPVLEAAPSRPVQVQGLSSVPRAGDTFIVTEEDRTARQIAEKREAAERNAQLAKARKRISLEDFTRALEEGKVEALNLIIKGDVSGAVEALEESLMKIEVDDSVSLRILHRGVGAITESDIDLATIDNAIVIGFNVRPDVKARERAAREGVDVRFYSVIYNAIDDIESSLKGMLKPEFEEVQSGVADIREVFRSSKFGNIAGVIVRSGTITRNAKARVIRDGVVIADNLAIESLRRFKDDVTEVRTDFECGIGLGKYNDIQVGDEIETIEMREKPRV.

The segment at 58-317 (LEAEGHLPGA…GVTVPRGDGG (260 aa)) is disordered. The span at 120–142 (EKVAASEAADAKPAAGAPADTAK) shows a compositional bias: low complexity. Positions 195 to 206 (SNIPRPAPPRPG) are enriched in pro residues. 2 stretches are compositionally biased toward gly residues: residues 214-227 (RPGG…GGRP) and 235-282 (SAGG…GRGG). A compositionally biased stretch (basic residues) spans 283–294 (GKSKARKSKRAK). The 175-residue stretch at 409-583 (IRPPVVTVMG…LTADAGLDLR (175 aa)) folds into the tr-type G domain. The interval 418–425 (GHVDHGKT) is G1. 418–425 (GHVDHGKT) contacts GTP. Positions 443-447 (GITQH) are G2. The interval 468–471 (DTPG) is G3. GTP contacts are provided by residues 468–472 (DTPGH) and 522–525 (NKVD). Residues 522–525 (NKVD) are G4. The G5 stretch occupies residues 558-560 (SAR).

The protein belongs to the TRAFAC class translation factor GTPase superfamily. Classic translation factor GTPase family. IF-2 subfamily.

It is found in the cytoplasm. Functionally, one of the essential components for the initiation of protein synthesis. Protects formylmethionyl-tRNA from spontaneous hydrolysis and promotes its binding to the 30S ribosomal subunits. Also involved in the hydrolysis of GTP during the formation of the 70S ribosomal complex. This is Translation initiation factor IF-2 from Leifsonia xyli subsp. xyli (strain CTCB07).